The sequence spans 369 residues: MLGPTPELDQTLQAYDYLLPETFIAQTPLVPRDRSRLLVVQQQAHQHKIFQDLVALLQPGDLLVFNDTRVIPARLLGRKLNSELAQPVEVFLLEPRQPNTWLALVRPGRRLKPGAQIEFGPPERPLLRAEILATDADTRGRIIQFESLVEEPFEDLLEQLGEVPLPPYIQESTAQPEQYQTVYAQHPGAVAAPTAGLHFTPELLARLQSEGINQAHLTLHVGIGTFRPVETDDILQHHMHSEWVDLPAATVDAIRTTKASGGRVIAVGTTVTRALEGACQNGPLVPWQGRTNLFIYPSYQWRVVDGLITNFHLPKSSLLMLVSALVGRERLLALYEDAIAQQYRFYSFGDAMLVLPEAVIAERSPDPVF.

The protein belongs to the QueA family. As to quaternary structure, monomer.

It is found in the cytoplasm. The catalysed reaction is 7-aminomethyl-7-carbaguanosine(34) in tRNA + S-adenosyl-L-methionine = epoxyqueuosine(34) in tRNA + adenine + L-methionine + 2 H(+). The protein operates within tRNA modification; tRNA-queuosine biosynthesis. Transfers and isomerizes the ribose moiety from AdoMet to the 7-aminomethyl group of 7-deazaguanine (preQ1-tRNA) to give epoxyqueuosine (oQ-tRNA). The protein is S-adenosylmethionine:tRNA ribosyltransferase-isomerase of Acaryochloris marina (strain MBIC 11017).